Reading from the N-terminus, the 89-residue chain is Small ribosomal subunit protein uS15 (89 aa).

Residues 1 to 21 show a composition bias toward basic and acidic residues; sequence MVMTAEDKAQVIGEHKKHDGD. Residues 1–24 are disordered; it reads MVMTAEDKAQVIGEHKKHDGDTGS.

This sequence belongs to the universal ribosomal protein uS15 family. In terms of assembly, part of the 30S ribosomal subunit. Forms a bridge to the 50S subunit in the 70S ribosome, contacting the 23S rRNA.

One of the primary rRNA binding proteins, it binds directly to 16S rRNA where it helps nucleate assembly of the platform of the 30S subunit by binding and bridging several RNA helices of the 16S rRNA. Functionally, forms an intersubunit bridge (bridge B4) with the 23S rRNA of the 50S subunit in the ribosome. The polypeptide is Small ribosomal subunit protein uS15 (Solidesulfovibrio magneticus (strain ATCC 700980 / DSM 13731 / RS-1) (Desulfovibrio magneticus)).